The following is a 636-amino-acid chain: 1-deoxy-D-xylulose-5-phosphate synthase (636 aa).

Thiamine diphosphate contacts are provided by residues H75 and 116 to 118; that span reads AHS. D147 contacts Mg(2+). Thiamine diphosphate-binding positions include 148–149, N177, Y288, and E370; that span reads GA. N177 contributes to the Mg(2+) binding site.

The protein belongs to the transketolase family. DXPS subfamily. As to quaternary structure, homodimer. Requires Mg(2+) as cofactor. Thiamine diphosphate serves as cofactor.

The catalysed reaction is D-glyceraldehyde 3-phosphate + pyruvate + H(+) = 1-deoxy-D-xylulose 5-phosphate + CO2. It participates in metabolic intermediate biosynthesis; 1-deoxy-D-xylulose 5-phosphate biosynthesis; 1-deoxy-D-xylulose 5-phosphate from D-glyceraldehyde 3-phosphate and pyruvate: step 1/1. Catalyzes the acyloin condensation reaction between C atoms 2 and 3 of pyruvate and glyceraldehyde 3-phosphate to yield 1-deoxy-D-xylulose-5-phosphate (DXP). The polypeptide is 1-deoxy-D-xylulose-5-phosphate synthase (Ralstonia nicotianae (strain ATCC BAA-1114 / GMI1000) (Ralstonia solanacearum)).